Reading from the N-terminus, the 100-residue chain is NAD(P)H-quinone oxidoreductase subunit 4L, chloroplastic (100 aa).

A run of 3 helical transmembrane segments spans residues 1–21 (MIENILIIGAFLFCIGTYGLI), 27–47 (IKVLMCLELMFNSVNINLVAF), and 61–81 (FAVFIIAIAAAEAAIGLAIVF).

This sequence belongs to the complex I subunit 4L family. NDH is composed of at least 16 different subunits, 5 of which are encoded in the nucleus.

Its subcellular location is the plastid. It is found in the chloroplast thylakoid membrane. The catalysed reaction is a plastoquinone + NADH + (n+1) H(+)(in) = a plastoquinol + NAD(+) + n H(+)(out). It catalyses the reaction a plastoquinone + NADPH + (n+1) H(+)(in) = a plastoquinol + NADP(+) + n H(+)(out). NDH shuttles electrons from NAD(P)H:plastoquinone, via FMN and iron-sulfur (Fe-S) centers, to quinones in the photosynthetic chain and possibly in a chloroplast respiratory chain. The immediate electron acceptor for the enzyme in this species is believed to be plastoquinone. Couples the redox reaction to proton translocation, and thus conserves the redox energy in a proton gradient. In Chaetosphaeridium globosum (Charophycean green alga), this protein is NAD(P)H-quinone oxidoreductase subunit 4L, chloroplastic.